A 551-amino-acid chain; its full sequence is ATP synthase subunit alpha (551 aa).

174–181 lines the ATP pocket; sequence GDRQTGKT.

The protein belongs to the ATPase alpha/beta chains family. F-type ATPases have 2 components, CF(1) - the catalytic core - and CF(0) - the membrane proton channel. CF(1) has five subunits: alpha(3), beta(3), gamma(1), delta(1), epsilon(1). CF(0) has three main subunits: a(1), b(2) and c(9-12). The alpha and beta chains form an alternating ring which encloses part of the gamma chain. CF(1) is attached to CF(0) by a central stalk formed by the gamma and epsilon chains, while a peripheral stalk is formed by the delta and b chains.

Its subcellular location is the cell inner membrane. The enzyme catalyses ATP + H2O + 4 H(+)(in) = ADP + phosphate + 5 H(+)(out). In terms of biological role, produces ATP from ADP in the presence of a proton gradient across the membrane. The alpha chain is a regulatory subunit. The chain is ATP synthase subunit alpha from Salinibacter ruber (strain DSM 13855 / M31).